The primary structure comprises 219 residues: Neurotrophic factor BDNF precursor form (219 aa).

Positions 1-5 (SCMKA) are cleaved as a signal peptide. The propeptide occupies 6-114 (APMKEVSIRG…AANMSMRVRR (109 aa)). Asparagine 107 carries an N-linked (GlcNAc...) asparagine glycan. An intrachain disulfide couples cysteine 127 to cysteine 194.

The protein belongs to the NGF-beta family.

It is found in the secreted. In terms of biological role, promotes the survival of neuronal populations that are all located either in the central nervous system or directly connected to it. This is Neurotrophic factor BDNF precursor form (BDNF) from Loxocemus bicolor (Mexican burrowing python).